We begin with the raw amino-acid sequence, 845 residues long: MPLSYQHFRKLLLLDDGTEAGPLEEELPRLADADLNRRVAEDLNLGNLNVSIPWTHKVGNFTGLYSSTAPIFNPEWQTPSFPKIHLQEDIINRCQQFVGPLTVNEKRRLKLIMPARFYPTHTKYLPLDKGIKPYYPDQVVNHYFQTRHYLHTLWKAGILYKRETTRSASFCGSPYSWEQELQHGRLVIKTSQRHGDESFCSQPSGILSRSSVGPCIRSQLKQSRLGLQPHQGPLASSQPGRSGSIRARVHPSTRRCFGVEPSGSGHVDPSVNNSSSCLRQSAVRKAAYSHLSTSKRQSSSGHAVEFHCLPPSSARPQSQGSVFSCWWLQFRNSKPCSEYCLSHLVNLREDRGPCDEHGEHHIRIPRTPARVTGGVFLVDKNPHNTAESRLVVDFSQFSRGITRVSWPKFAIPNLQSLTNLLSSNLSWLSLDVSAAFYHIPLHPAAMPHLLIGSSGLSRYVARLSSNSRINNNQYGTMQNLHDSCSRQLYVSLMLLYKTYGWKLHLYSHPIVLGFRKIPMGVGLSPFLLAQFTSAICSVVRRAFPHCLAFSYMDDVVLGAKSVQHREFLYTAVTNFLLSLGIHLNPNKTKRWGYSLNFMGYVIGSWGTLPQDHIVQKIKHCFRKLPVNRPIDWKVCQRIVGLLGFAAPFTQCGYPALMPLYACIQAKQAFTFSPTYKAFLSKQYMNLYPVARQRPGLCQVFADATPTGWGLAIGHQRMRGTFVAPLPIHTAELLAACFARSRSGAKLIGTDNSVVLSRKYTSFPWLLGCAANWILRGTSFVYVPSALNPADDPSRGRLGLSRPLLRLPFQPTTGRTSLYAVSPSVPSHLPVRVHFASPLHVAWRPP.

The segment at 1–179 is terminal protein domain (TP); that stretch reads MPLSYQHFRK…FCGSPYSWEQ (179 aa). Residues 180–348 are spacer; the sequence is ELQHGRLVIK…YCLSHLVNLR (169 aa). A disordered region spans residues 226-246; sequence GLQPHQGPLASSQPGRSGSIR. Positions 349–692 are polymerase/reverse transcriptase domain (RT); it reads EDRGPCDEHG…YMNLYPVARQ (344 aa). The region spanning 359 to 602 is the Reverse transcriptase domain; sequence EHHIRIPRTP…YSLNFMGYVI (244 aa). Residues Asp431, Asp553, and Asp554 each coordinate Mg(2+).

This sequence belongs to the hepadnaviridae P protein family.

It catalyses the reaction DNA(n) + a 2'-deoxyribonucleoside 5'-triphosphate = DNA(n+1) + diphosphate. It carries out the reaction Endonucleolytic cleavage to 5'-phosphomonoester.. Its activity is regulated as follows. Activated by host HSP70 and HSP40 in vitro to be able to bind the epsilon loop of the pgRNA. Because deletion of the RNase H region renders the protein partly chaperone-independent, the chaperones may be needed indirectly to relieve occlusion of the RNA-binding site by this domain. Inhibited by several reverse-transcriptase inhibitors: Lamivudine, Adefovir and Entecavir. Multifunctional enzyme that converts the viral RNA genome into dsDNA in viral cytoplasmic capsids. This enzyme displays a DNA polymerase activity that can copy either DNA or RNA templates, and a ribonuclease H (RNase H) activity that cleaves the RNA strand of RNA-DNA heteroduplexes in a partially processive 3'- to 5'-endonucleasic mode. Neo-synthesized pregenomic RNA (pgRNA) are encapsidated together with the P protein, and reverse-transcribed inside the nucleocapsid. Initiation of reverse-transcription occurs first by binding the epsilon loop on the pgRNA genome, and is initiated by protein priming, thereby the 5'-end of (-)DNA is covalently linked to P protein. Partial (+)DNA is synthesized from the (-)DNA template and generates the relaxed circular DNA (RC-DNA) genome. After budding and infection, the RC-DNA migrates in the nucleus, and is converted into a plasmid-like covalently closed circular DNA (cccDNA). The activity of P protein does not seem to be necessary for cccDNA generation, and is presumably released from (+)DNA by host nuclear DNA repair machinery. The protein is Protein P of Hepatitis B virus genotype A2 subtype adw2 (isolate Germany/991/1990) (HBV-A).